The sequence spans 130 residues: MTDYCYPKAKRLLKPAEFKPVFNQPLFKVHQTHFMAFAYDSDHLQARLGMAITKKKIPTAVARNTIKRIIREQFRHTHAQLPALDVVFILKKSTKALSNEQMRQEISDILSKVISKQRRATAADVKHKDK.

The protein belongs to the RnpA family. In terms of assembly, consists of a catalytic RNA component (M1 or rnpB) and a protein subunit.

The enzyme catalyses Endonucleolytic cleavage of RNA, removing 5'-extranucleotides from tRNA precursor.. Functionally, RNaseP catalyzes the removal of the 5'-leader sequence from pre-tRNA to produce the mature 5'-terminus. It can also cleave other RNA substrates such as 4.5S RNA. The protein component plays an auxiliary but essential role in vivo by binding to the 5'-leader sequence and broadening the substrate specificity of the ribozyme. This chain is Ribonuclease P protein component, found in Psychrobacter sp. (strain PRwf-1).